We begin with the raw amino-acid sequence, 613 residues long: Ethylene response sensor 1 (613 aa).

Transmembrane regions (helical) follow at residues 23 to 43, 58 to 78, and 95 to 115; these read ISDALIALAYFSIPLELIYFV, FGAFIILCGATHFINLWMFFM, and AVVSCATALMLVHIIPDLLSV. 2 residues coordinate Cu cation: cysteine 65 and histidine 69. Residues 158-307 enclose the GAF domain; sequence DRHTILRTTL…NVADQVAVAL (150 aa). Residues 350–589 enclose the Histidine kinase domain; sequence VMNHEMRTPM…SFIIRLGICN (240 aa). Position 353 is a phosphohistidine; by autocatalysis (histidine 353).

This sequence belongs to the ethylene receptor family. Homodimer; disulfide-linked. Heteromer with ETR1. Cu cation serves as cofactor. Post-translationally, autophosphorylated on both His and Ser residues in the presence of manganese. Loss of His autophosphorylation in the presence of both manganese and magnesium. Expressed in etiolated seedlings, leaves, stems, roots, flowers, embryos, anthers, carpels and ovules.

Its subcellular location is the endoplasmic reticulum membrane. The catalysed reaction is ATP + protein L-histidine = ADP + protein N-phospho-L-histidine.. Ethylene receptor related to bacterial two-component regulators. Acts as a redundant negative regulator of ethylene signaling. The sequence is that of Ethylene response sensor 1 (ERS1) from Arabidopsis thaliana (Mouse-ear cress).